Reading from the N-terminus, the 72-residue chain is Translational regulator CsrA (72 aa).

It belongs to the CsrA/RsmA family. Homodimer; the beta-strands of each monomer intercalate to form a hydrophobic core, while the alpha-helices form wings that extend away from the core.

The protein resides in the cytoplasm. In terms of biological role, a translational regulator that binds mRNA to regulate translation initiation and/or mRNA stability. Usually binds in the 5'-UTR at or near the Shine-Dalgarno sequence preventing ribosome-binding, thus repressing translation. Its main target seems to be the major flagellin gene, while its function is anatagonized by FliW. This chain is Translational regulator CsrA, found in Clostridium botulinum (strain Okra / Type B1).